The primary structure comprises 387 residues: F-box protein At5g41490 (387 aa).

The F-box domain maps to 2 to 47; sequence ATMITNLRRDLIEEIISRVPLRSMKAVRLTCKSWNNISKSEIFTKM.

This Arabidopsis thaliana (Mouse-ear cress) protein is F-box protein At5g41490.